The chain runs to 248 residues: DNA repair protein RecO (248 aa).

Belongs to the RecO family.

Involved in DNA repair and RecF pathway recombination. This chain is DNA repair protein RecO, found in Chelativorans sp. (strain BNC1).